A 217-amino-acid polypeptide reads, in one-letter code: Probable transaldolase (217 aa).

Lys83 functions as the Schiff-base intermediate with substrate in the catalytic mechanism.

Belongs to the transaldolase family. Type 3B subfamily.

Its subcellular location is the cytoplasm. The catalysed reaction is D-sedoheptulose 7-phosphate + D-glyceraldehyde 3-phosphate = D-erythrose 4-phosphate + beta-D-fructose 6-phosphate. It functions in the pathway carbohydrate degradation; pentose phosphate pathway; D-glyceraldehyde 3-phosphate and beta-D-fructose 6-phosphate from D-ribose 5-phosphate and D-xylulose 5-phosphate (non-oxidative stage): step 2/3. Functionally, transaldolase is important for the balance of metabolites in the pentose-phosphate pathway. The sequence is that of Probable transaldolase from Pseudothermotoga lettingae (strain ATCC BAA-301 / DSM 14385 / NBRC 107922 / TMO) (Thermotoga lettingae).